The chain runs to 274 residues: Exosome complex component Rrp42 (274 aa).

This sequence belongs to the RNase PH family. Rrp42 subfamily. In terms of assembly, component of the archaeal exosome complex. Forms a hexameric ring-like arrangement composed of 3 Rrp41-Rrp42 heterodimers. The hexameric ring associates with a trimer of Rrp4 and/or Csl4 subunits.

The protein localises to the cytoplasm. Functionally, non-catalytic component of the exosome, which is a complex involved in RNA degradation. Contributes to the structuring of the Rrp41 active site. This is Exosome complex component Rrp42 from Pyrobaculum aerophilum (strain ATCC 51768 / DSM 7523 / JCM 9630 / CIP 104966 / NBRC 100827 / IM2).